The primary structure comprises 125 residues: Cu-Zn superoxide dismutase-like protein OPG175 (125 aa).

An intrachain disulfide couples C52 to C102.

Belongs to the Cu-Zn superoxide dismutase family.

The protein localises to the virion. The protein resides in the host cytoplasm. Functionally, superoxide dismutase-like protein with no enzymatic activity. In Vaccinia virus (strain Western Reserve) (VACV), this protein is Cu-Zn superoxide dismutase-like protein OPG175 (OPG175).